We begin with the raw amino-acid sequence, 658 residues long: Pentatricopeptide repeat-containing protein 7, mitochondrial (658 aa).

A mitochondrion-targeting transit peptide spans 1 to 29 (MRNCVSPLLFAWTKHLRLREFKIPFPNRL). PPR repeat units follow at residues 130–164 (VKKR…TPIW) and 220–254 (LYVE…SESL).

The protein resides in the mitochondrion. In terms of biological role, mitochondrial RNA-binding protein required for the stability of the atp6 mRNA. The chain is Pentatricopeptide repeat-containing protein 7, mitochondrial (ppr7) from Schizosaccharomyces pombe (strain 972 / ATCC 24843) (Fission yeast).